We begin with the raw amino-acid sequence, 211 residues long: Small ribosomal subunit protein uS4 (211 aa).

The 62-residue stretch at 99 to 160 (RRLDSVVYQM…KSRNIQQVRE (62 aa)) folds into the S4 RNA-binding domain.

Belongs to the universal ribosomal protein uS4 family. Part of the 30S ribosomal subunit. Contacts protein S5. The interaction surface between S4 and S5 is involved in control of translational fidelity.

Functionally, one of the primary rRNA binding proteins, it binds directly to 16S rRNA where it nucleates assembly of the body of the 30S subunit. In terms of biological role, with S5 and S12 plays an important role in translational accuracy. This is Small ribosomal subunit protein uS4 from Petrotoga mobilis (strain DSM 10674 / SJ95).